The chain runs to 135 residues: Sex-regulated protein janus-A (135 aa).

Substrate is bound at residue Lys-37. His-63 functions as the Proton acceptor in the catalytic mechanism. Residue 104–106 (SQG) coordinates substrate.

It belongs to the janus family.

Functionally, janA and janB regulate somatic sex differentiation. This is Sex-regulated protein janus-A (janA) from Drosophila orena (Fruit fly).